A 342-amino-acid polypeptide reads, in one-letter code: uncharacterized protein (342 aa).

A run of 10 helical transmembrane segments spans residues 8–28, 39–59, 79–99, 108–128, 142–162, 175–195, 207–227, 242–262, 276–296, and 304–324; these read FESS…TSLF, ISFL…MLWI, SSFS…FILI, IFWV…PFYM, GWYI…LIMP, INYF…AVVI, AMAP…VALI, FYIF…MAII, AMSW…THLV, and IVDY…IVTL.

Belongs to the tellurite-resistance/dicarboxylate transporter (TDT) family.

It is found in the cell membrane. This is an uncharacterized protein from Methanocaldococcus jannaschii (strain ATCC 43067 / DSM 2661 / JAL-1 / JCM 10045 / NBRC 100440) (Methanococcus jannaschii).